A 534-amino-acid polypeptide reads, in one-letter code: Putative fimbrium tip subunit Fim1C (534 aa).

An N-terminal signal peptide occupies residues 1–21; it reads MKQYKLMQVALLAILLFGWAG. Residue Cys-22 is the site of N-palmitoyl cysteine attachment. The S-diacylglycerol cysteine moiety is linked to residue Cys-22. Residues 22 to 54 constitute a propeptide that is removed on maturation; sequence CSQNEEEVPGNVRNGIVLNVTDTGIISNEPSTR.

The protein belongs to the bacteroidetes fimbrillin superfamily. Mfa-like family. In terms of assembly, may be part of the fimbrial tip.

It localises to the fimbrium. The protein localises to the cell outer membrane. In terms of biological role, probably a component of the fimbrium tip. Fimbriae are filamentous appendages on the cell surface that mediate cell adhesion and biofilm formation. The protein is Putative fimbrium tip subunit Fim1C of Bacteroides ovatus (strain ATCC 8483 / DSM 1896 / JCM 5824 / BCRC 10623 / CCUG 4943 / NCTC 11153).